The primary structure comprises 392 residues: Mitochondrial distribution and morphology protein 10 (392 aa).

This sequence belongs to the MDM10 family. As to quaternary structure, component of the ER-mitochondria encounter structure (ERMES) or MDM complex, composed of MMM1, MDM10, MDM12 and MDM34. Associates with the mitochondrial outer membrane sorting assembly machinery SAM(core) complex.

It is found in the mitochondrion outer membrane. Functionally, component of the ERMES/MDM complex, which serves as a molecular tether to connect the endoplasmic reticulum and mitochondria. Components of this complex are involved in the control of mitochondrial shape and protein biogenesis and may function in phospholipid exchange. MDM10 is involved in the late assembly steps of the general translocase of the mitochondrial outer membrane (TOM complex). Functions in the TOM40-specific route of the assembly of outer membrane beta-barrel proteins, including the association of TOM40 with the receptor TOM22 and small TOM proteins. Can associate with the SAM(core) complex as well as the MDM12-MMM1 complex, both involved in late steps of the major beta-barrel assembly pathway, that is responsible for biogenesis of all outer membrane beta-barrel proteins. May act as a switch that shuttles between both complexes and channels precursor proteins into the TOM40-specific pathway. Plays a role in mitochondrial morphology and in the inheritance of mitochondria. This is Mitochondrial distribution and morphology protein 10 from Phaeosphaeria nodorum (strain SN15 / ATCC MYA-4574 / FGSC 10173) (Glume blotch fungus).